A 589-amino-acid chain; its full sequence is ATP-dependent lipid A-core flippase (589 aa).

Helical transmembrane passes span 29–49, 68–88, 157–177, 254–274, and 283–303; these read WLLV…STFL, ALWL…AGYI, VIGA…AILL, ISSA…LLIA, and LSPG…PALK. One can recognise an ABC transmembrane type-1 domain in the interval 32–314; it reads VVAACGALLE…LTNVQNMLQS (283 aa). The ABC transporter domain maps to 346–582; the sequence is IEFRGITARY…DGLYAYLYSM (237 aa). 380–387 is an ATP binding site; the sequence is GRSGSGKS.

Belongs to the ABC transporter superfamily. Lipid exporter (TC 3.A.1.106) family. As to quaternary structure, homodimer.

The protein localises to the cell inner membrane. The enzyme catalyses ATP + H2O + lipid A-core oligosaccharideSide 1 = ADP + phosphate + lipid A-core oligosaccharideSide 2.. In terms of biological role, involved in lipopolysaccharide (LPS) biosynthesis. Translocates lipid A-core from the inner to the outer leaflet of the inner membrane. Transmembrane domains (TMD) form a pore in the inner membrane and the ATP-binding domain (NBD) is responsible for energy generation. This Xylella fastidiosa (strain Temecula1 / ATCC 700964) protein is ATP-dependent lipid A-core flippase.